We begin with the raw amino-acid sequence, 126 residues long: Aspartate 1-decarboxylase (126 aa).

Serine 25 serves as the catalytic Schiff-base intermediate with substrate; via pyruvic acid. Serine 25 is subject to Pyruvic acid (Ser). Threonine 57 is a substrate binding site. Tyrosine 58 (proton donor) is an active-site residue. Substrate is bound at residue glycine 73 to alanine 75.

Belongs to the PanD family. Heterooctamer of four alpha and four beta subunits. Pyruvate serves as cofactor. In terms of processing, is synthesized initially as an inactive proenzyme, which is activated by self-cleavage at a specific serine bond to produce a beta-subunit with a hydroxyl group at its C-terminus and an alpha-subunit with a pyruvoyl group at its N-terminus.

The protein resides in the cytoplasm. The enzyme catalyses L-aspartate + H(+) = beta-alanine + CO2. Its pathway is cofactor biosynthesis; (R)-pantothenate biosynthesis; beta-alanine from L-aspartate: step 1/1. In terms of biological role, catalyzes the pyruvoyl-dependent decarboxylation of aspartate to produce beta-alanine. In Pectobacterium carotovorum subsp. carotovorum (strain PC1), this protein is Aspartate 1-decarboxylase.